Here is an 86-residue protein sequence, read N- to C-terminus: Large ribosomal subunit protein uL23 (86 aa).

The protein belongs to the universal ribosomal protein uL23 family. In terms of assembly, part of the 50S ribosomal subunit. Contacts protein L29.

Functionally, binds to 23S rRNA. One of the proteins that surrounds the polypeptide exit tunnel on the outside of the ribosome. In Thermococcus onnurineus (strain NA1), this protein is Large ribosomal subunit protein uL23.